Consider the following 2282-residue polypeptide: Protein Ycf2 (2282 aa).

1635–1642 (GSIGTGRS) is an ATP binding site.

This sequence belongs to the Ycf2 family.

It is found in the plastid. It localises to the chloroplast stroma. Functionally, probable ATPase of unknown function. Its presence in a non-photosynthetic plant (Epifagus virginiana) and experiments in tobacco indicate that it has an essential function which is probably not related to photosynthesis. The protein is Protein Ycf2 of Populus alba (White poplar).